We begin with the raw amino-acid sequence, 379 residues long: Chaperone protein DnaJ (379 aa).

In terms of domain architecture, J spans 5–69; sequence EFYDRLGVSK…QKRAAYDQYG (65 aa). A CR-type zinc finger spans residues 135–217; that stretch reads GAEKEVSYNR…CHGTGHEKKT (83 aa). Zn(2+)-binding residues include Cys-148, Cys-151, Cys-165, Cys-168, Cys-191, Cys-194, Cys-205, and Cys-208. 4 CXXCXGXG motif repeats span residues 148 to 155, 165 to 172, 191 to 198, and 205 to 212; these read CHTCSGSG, CQKCHGSG, CDVCQGSG, and CPTCHGTG.

Belongs to the DnaJ family. Homodimer. The cofactor is Zn(2+).

Its subcellular location is the cytoplasm. Functionally, participates actively in the response to hyperosmotic and heat shock by preventing the aggregation of stress-denatured proteins and by disaggregating proteins, also in an autonomous, DnaK-independent fashion. Unfolded proteins bind initially to DnaJ; upon interaction with the DnaJ-bound protein, DnaK hydrolyzes its bound ATP, resulting in the formation of a stable complex. GrpE releases ADP from DnaK; ATP binding to DnaK triggers the release of the substrate protein, thus completing the reaction cycle. Several rounds of ATP-dependent interactions between DnaJ, DnaK and GrpE are required for fully efficient folding. Also involved, together with DnaK and GrpE, in the DNA replication of plasmids through activation of initiation proteins. The protein is Chaperone protein DnaJ of Streptococcus agalactiae serotype V (strain ATCC BAA-611 / 2603 V/R).